The chain runs to 89 residues: MAVTTDQKSQVMRDYQRAAGDTGSPEVQVALLTTRINSLVDHFKQHVKDHHSRRGLLRMVSRRRKLLDYLKSKNNDSYRALIERLGLRK.

Over residues 1 to 10 (MAVTTDQKSQ) the composition is skewed to polar residues. Residues 1 to 22 (MAVTTDQKSQVMRDYQRAAGDT) form a disordered region.

It belongs to the universal ribosomal protein uS15 family. In terms of assembly, part of the 30S ribosomal subunit. Forms a bridge to the 50S subunit in the 70S ribosome, contacting the 23S rRNA.

Functionally, one of the primary rRNA binding proteins, it binds directly to 16S rRNA where it helps nucleate assembly of the platform of the 30S subunit by binding and bridging several RNA helices of the 16S rRNA. Its function is as follows. Forms an intersubunit bridge (bridge B4) with the 23S rRNA of the 50S subunit in the ribosome. This is Small ribosomal subunit protein uS15 from Nitrosomonas europaea (strain ATCC 19718 / CIP 103999 / KCTC 2705 / NBRC 14298).